Here is a 314-residue protein sequence, read N- to C-terminus: 3'-5' exoribonuclease YhaM (314 aa).

One can recognise an HD domain in the interval 163 to 279 (HVVSMLDLAK…LHYIDNLDAK (117 aa)).

It belongs to the YhaM family.

Shows a 3'-5' exoribonuclease activity. The polypeptide is 3'-5' exoribonuclease YhaM (Bacillus anthracis (strain CDC 684 / NRRL 3495)).